We begin with the raw amino-acid sequence, 451 residues long: Cyclin-dependent kinase 18 (451 aa).

Residues serine 12, serine 51, serine 66, serine 75, and serine 109 each carry the phosphoserine modification. Positions 121 to 402 constitute a Protein kinase domain; it reads YVKLDKLGEG…AEAALNHPYF (282 aa). Residues 127–135 and lysine 150 each bind ATP; that span reads LGEGTYATV. Residue aspartate 242 is the Proton acceptor of the active site. A phosphoserine mark is found at serine 417 and serine 420.

The protein belongs to the protein kinase superfamily. CMGC Ser/Thr protein kinase family. CDC2/CDKX subfamily. In terms of tissue distribution, in brain, kidney, intestine and at a much lower level, in fetal tissues.

The enzyme catalyses L-seryl-[protein] + ATP = O-phospho-L-seryl-[protein] + ADP + H(+). The catalysed reaction is L-threonyl-[protein] + ATP = O-phospho-L-threonyl-[protein] + ADP + H(+). In terms of biological role, may play a role in signal transduction cascades in terminally differentiated cells. This is Cyclin-dependent kinase 18 (Cdk18) from Mus musculus (Mouse).